The following is a 291-amino-acid chain: Presqualene diphosphate synthase (291 aa).

The interval 1 to 23 (MTSAMKKIQPEAFSEKSSDSQAS) is disordered.

This sequence belongs to the phytoene/squalene synthase family. HpnD subfamily.

It catalyses the reaction 2 (2E,6E)-farnesyl diphosphate = presqualene diphosphate + diphosphate. It functions in the pathway secondary metabolite biosynthesis; hopanoid biosynthesis. Involved in the biosynthesis of the hopanoid precursor squalene (SQ) from farnesyl diphosphate (FPP). Catalyzes the first step, the formation of presqualene diphosphate (PSPP) from two molecules of FPP. This Zymomonas mobilis subsp. mobilis (strain ATCC 31821 / ZM4 / CP4) protein is Presqualene diphosphate synthase.